A 146-amino-acid polypeptide reads, in one-letter code: Hemoglobin subunit beta (146 aa).

Position 1 is an N-acetylvaline (Val-1). One can recognise a Globin domain in the interval 2–146 (HLTADEKSAV…VATALGHKYH (145 aa)). Residue Thr-12 is modified to Phosphothreonine. Position 44 is a phosphoserine (Ser-44). Lys-59 is modified (N6-acetyllysine). Residue His-63 participates in heme b binding. Lys-82 bears the N6-acetyllysine mark. A heme b-binding site is contributed by His-92. Cys-93 is subject to S-nitrosocysteine. An N6-acetyllysine modification is found at Lys-144.

It belongs to the globin family. Heterotetramer of two alpha chains and two beta chains. Red blood cells.

In terms of biological role, involved in oxygen transport from the lung to the various peripheral tissues. In Antrozous pallidus (Pallid bat), this protein is Hemoglobin subunit beta (HBB).